A 306-amino-acid chain; its full sequence is UDP-N-acetylenolpyruvoylglucosamine reductase (306 aa).

Residues 34-198 (VGGPADLLIT…LEVTFKLHNS (165 aa)) form the FAD-binding PCMH-type domain. The active site involves arginine 177. Residue serine 227 is the Proton donor of the active site. Glutamate 297 is an active-site residue.

It belongs to the MurB family. Requires FAD as cofactor.

It is found in the cytoplasm. The enzyme catalyses UDP-N-acetyl-alpha-D-muramate + NADP(+) = UDP-N-acetyl-3-O-(1-carboxyvinyl)-alpha-D-glucosamine + NADPH + H(+). It participates in cell wall biogenesis; peptidoglycan biosynthesis. In terms of biological role, cell wall formation. The sequence is that of UDP-N-acetylenolpyruvoylglucosamine reductase from Clostridium botulinum (strain Langeland / NCTC 10281 / Type F).